A 676-amino-acid chain; its full sequence is Pescadillo homolog (676 aa).

Positions Ile298–Glu327 form a coiled coil. 4 disordered regions span residues Ile298 to Asp338, Pro413 to Pro439, Val478 to Ala502, and Glu515 to Ala676. Residues Ala302–Glu327 are compositionally biased toward acidic residues. In terms of domain architecture, BRCT spans Glu351 to Pro466. Residues Ala415–Ala427 show a composition bias toward low complexity. Acidic residues-rich tracts occupy residues Glu515–Ala524, Asp539–Gly557, and Phe565–Glu577. Residues Glu568 to Ala676 are a coiled coil. Basic and acidic residues-rich tracts occupy residues Glu579 to Gln608, Lys620 to Lys631, Lys643 to Leu659, and Leu666 to Ala676.

This sequence belongs to the pescadillo family. In terms of assembly, component of the NOP7 complex, composed of ERB1, NOP7 and YTM1. The complex is held together by ERB1, which interacts with NOP7 via its N-terminal domain and with YTM1 via a high-affinity interaction between the seven-bladed beta-propeller domains of the 2 proteins. The NOP7 complex associates with the 66S pre-ribosome.

It is found in the nucleus. It localises to the nucleolus. The protein localises to the nucleoplasm. Its function is as follows. Component of the NOP7 complex, which is required for maturation of the 25S and 5.8S ribosomal RNAs and formation of the 60S ribosome. The sequence is that of Pescadillo homolog from Phaeosphaeria nodorum (strain SN15 / ATCC MYA-4574 / FGSC 10173) (Glume blotch fungus).